Consider the following 315-residue polypeptide: Alpha- and gamma-adaptin-binding protein p34 (315 aa).

A disordered region spans residues 197-233 (IGSADPCHPEQPHLPAADRTESLSDHRGGASNTTDAQ). Positions 203–224 (CHPEQPHLPAADRTESLSDHRG) are enriched in basic and acidic residues. Phosphoserine is present on residues Ser310 and Ser311.

In terms of assembly, associated with AP-1 and AP-2 complexes.

The protein localises to the cytoplasm. It is found in the cytosol. Its function is as follows. May be involved in endocytic recycling of growth factor receptors such as EGFR. The polypeptide is Alpha- and gamma-adaptin-binding protein p34 (AAGAB) (Pongo abelii (Sumatran orangutan)).